A 1376-amino-acid polypeptide reads, in one-letter code: Phospholipid-transporting ATPase DRS2 (1376 aa).

A compositionally biased stretch (gly residues) spans 1-10 (MAGRPTGGPQ). Disordered regions lie at residues 1–151 (MAGR…AAAR) and 180–217 (GYSEMDLPLTEPGGGGGGAGGGGHSRADSSGIDPPKRD). Residues 1–306 (MAGRPTGGPQ…QIPGLSPTNR (306 aa)) are Cytoplasmic-facing. The span at 40-50 (DLMRTYTRDQE) shows a compositional bias: basic and acidic residues. The span at 85 to 96 (QSSSSNNNNNNN) shows a compositional bias: low complexity. Residues 97 to 115 (VSAPYSRSGRQYSQTSDLG) are compositionally biased toward polar residues. Over residues 191–203 (PGGGGGGAGGGGH) the composition is skewed to gly residues. A helical membrane pass occupies residues 307 to 327 (FTTIIPLVAVLMVSAGKELVE). The Extracellular segment spans residues 328–509 (DYRRKQADAA…KVEKKLNTLV (182 aa)). Asn339, Asn433, and Asn490 each carry an N-linked (GlcNAc...) asparagine glycan. A helical transmembrane segment spans residues 510–530 (LLLVGILMVLSIISTVGDLII). The Cytoplasmic portion of the chain corresponds to 531–559 (RRVEGDAISYLMLDQPDTAGKIAETFFKD). Residues 560–580 (MVTYWVLFSSLVPISLFVTVE) traverse the membrane as a helical segment. The Extracellular segment spans residues 581–1107 (MVKYWHGILI…VFSGAVIYES (527 aa)). Asp625 (4-aspartylphosphate intermediate) is an active-site residue. ATP contacts are provided by Asp625, Lys626, and Thr627. Asp625 contacts Mg(2+). Position 627 (Thr627) interacts with Mg(2+). Asn679 is a glycosylation site (N-linked (GlcNAc...) asparagine). ATP-binding residues include Glu720 and Phe761. A glycan (N-linked (GlcNAc...) asparagine) is linked at Asn762. Residues Ser763, Lys766, Lys784, Arg817, Thr818, Thr898, Gly899, Asp900, Arg991, and Lys997 each coordinate ATP. Residue Asp1018 participates in Mg(2+) binding. ATP-binding residues include Asn1021 and Asp1022. Asp1022 lines the Mg(2+) pocket. Asn1083 carries an N-linked (GlcNAc...) asparagine glycan. The chain crosses the membrane as a helical span at residues 1108 to 1128 (WTLTFYNVFYTVLPPLALGIL). Over 1129-1165 (DQFISARLLDRYPQLYSMGQQNQFFRMKVFIEWLLNA) the chain is Cytoplasmic. Residues 1166 to 1186 (VYHSIILYVFGELIWHGDLIL) form a helical membrane-spanning segment. Residues 1187-1190 (ENGQ) are Extracellular-facing. Residues 1191–1211 (IAGHWMWGTALYAPVLLTVLG) traverse the membrane as a helical segment. Residue Lys1212 coordinates a 1,2-diacyl-sn-glycero-3-phospho-(1D-myo-inositol 4-phosphate). The Cytoplasmic segment spans residues 1212-1224 (KAGLVTSNWTKYH). Residues 1225–1245 (VIAIPGSMAIWWIFIAVYGTV) form a helical membrane-spanning segment. At 1246-1257 (APMIPFSPEFHG) the chain is on the extracellular side. A helical membrane pass occupies residues 1258–1278 (IVPKLYSSPIFWLQSFALAIL). The Cytoplasmic segment spans residues 1279 to 1376 (CLLRDFAWKY…TSSRPQGQGT (98 aa)). A 1,2-diacyl-sn-glycero-3-phospho-(1D-myo-inositol 4-phosphate) contacts are provided by Arg1282, Trp1286, Lys1287, Tyr1298, and His1299.

The protein belongs to the cation transport ATPase (P-type) (TC 3.A.3) family. Type IV subfamily. Requires Mg(2+) as cofactor.

It is found in the cell membrane. The protein resides in the golgi apparatus. It localises to the trans-Golgi network membrane. It carries out the reaction ATP + H2O + phospholipidSide 1 = ADP + phosphate + phospholipidSide 2.. The enzyme catalyses a 1,2-diacyl-sn-glycero-3-phospho-L-serine(out) + ATP + H2O = a 1,2-diacyl-sn-glycero-3-phospho-L-serine(in) + ADP + phosphate + H(+). The catalysed reaction is a 1,2-diacyl-sn-glycero-3-phosphoethanolamine(out) + ATP + H2O = a 1,2-diacyl-sn-glycero-3-phosphoethanolamine(in) + ADP + phosphate + H(+). Its function is as follows. Catalytic component of a P4-ATPase flippase complex which catalyzes the hydrolysis of ATP coupled to the transport of phosphatidylserine and small amounts of ethanolamine from the lumen to the cytosolic leaflet of the trans-Golgi network and cell membrane and ensures the maintenance of asymmetric distribution of phospholipids. Required for efficient vesicle transport during toxin secretion. This chain is Phospholipid-transporting ATPase DRS2 (DRS2), found in Verticillium dahliae (strain VdLs.17 / ATCC MYA-4575 / FGSC 10137) (Verticillium wilt).